Here is a 301-residue protein sequence, read N- to C-terminus: m7GpppX diphosphatase (301 aa).

Residues E154, K176, and 237-248 contribute to the substrate site; that span reads HYQPSFYHLHVH. The Histidine triad motif motif lies at 244–248; it reads HLHVH. Residue H246 is the Nucleophile of the active site.

Belongs to the HIT family.

Its subcellular location is the nucleus. It carries out the reaction a 5'-end (N(7)-methyl 5'-triphosphoguanosine)-ribonucleoside in mRNA + H2O = N(7)-methyl-GMP + a 5'-end diphospho-ribonucleoside in mRNA + 2 H(+). It catalyses the reaction a 5'-end (N(2),N(2),N(7)-trimethyl 5'-triphosphoguanosine)-ribonucleoside in mRNA + H2O = (N(2),N(2),N(7))-trimethyl-GMP + a 5'-end diphospho-ribonucleoside in mRNA + 2 H(+). The hydrolytic product 7-methylguanosine diphosphate (m7GDP) efficiently inhibits the decapping scavenger activity and acts as a competitive inhibitor in vitro. In terms of biological role, decapping scavenger enzyme that catalyzes the cleavage of a residual cap structure following the degradation of mRNAs of the 3'-&gt;5' exosome-mediated mRNA decay pathway. Hydrolyzes cap analog structures like 7-methylguanosine nucleoside triphosphate (m7GpppG) and tri-methyl guanosine nucleoside triphosphate (m3(2,2,7)GpppG) with up to 2 nucleotide substrates (small capped oligoribonucleotides) and specifically releases 5'-phosphorylated RNA fragments and 7-methylguanosine monophosphate (m7GMP). Does not hydrolyze unmethylated cap analog (GpppG) and shows no decapping activity on intact m7GpppG-capped mRNA molecules. Does not hydrolyze 7-methylguanosine diphosphate (m7GDP) and tri-methylguanosine diphosphate (m3(2,2,7)GDP) to m(7)GMP and m3(2,2,7)GMP, respectively. May also play a role in the 5'-&gt;3 mRNA decay pathway; m7GDP, the downstream product released by the 5'-&gt;3' mRNA mediated decapping activity, may be also converted by dcs-1 to m7GMP. Binds to m7GpppG and strongly to m7GDP. This is m7GpppX diphosphatase from Ascaris suum (Pig roundworm).